The following is a 188-amino-acid chain: GMP synthase [glutamine-hydrolyzing] subunit A (188 aa).

Residues 3-188 enclose the Glutamine amidotransferase type-1 domain; the sequence is KVLVVAFGGQ…FQNFVELCKR (186 aa). Cysteine 79 acts as the Nucleophile in catalysis. Catalysis depends on residues histidine 166 and glutamate 168.

As to quaternary structure, heterodimer composed of a glutamine amidotransferase subunit (A) and a GMP-binding subunit (B).

The enzyme catalyses XMP + L-glutamine + ATP + H2O = GMP + L-glutamate + AMP + diphosphate + 2 H(+). The protein operates within purine metabolism; GMP biosynthesis; GMP from XMP (L-Gln route): step 1/1. Catalyzes the synthesis of GMP from XMP. This chain is GMP synthase [glutamine-hydrolyzing] subunit A, found in Ignicoccus hospitalis (strain KIN4/I / DSM 18386 / JCM 14125).